The chain runs to 1335 residues: Membrane-associated phosphatidylinositol transfer protein 2 (1335 aa).

2 disordered regions span residues 32 to 51 and 262 to 341; these read ETHG…YTDG and EEGP…SEEE. Residues 275 to 286 are compositionally biased toward polar residues; the sequence is KDQASGTTSDPG. A compositionally biased stretch (low complexity) spans 299–319; sequence KQWSTSSKSSRSSKRGASPSR. 4 positions are modified to phosphoserine: serine 334, serine 338, serine 365, and serine 586. The disordered stretch occupies residues 606 to 657; the sequence is HCSGGSGGGGSGGSSLESSRHLSRSNIDIPRSNGTEDSRRQLPRKRSDSSTY. Residues 609-618 show a composition bias toward gly residues; the sequence is GGSGGGGSGG. At serine 630 the chain carries Phosphoserine. The segment covering 639–653 has biased composition (basic and acidic residues); that stretch reads GTEDSRRQLPRKRSD. 3 positions are modified to phosphoserine: serine 686, serine 687, and serine 688. Positions 701-949 constitute a DDHD domain; sequence FDFEIADLFL…VSFLLRQVMR (249 aa). Arginine 814 carries the post-translational modification Omega-N-methylarginine. A disordered region spans residues 861–880; the sequence is ALPPPSPTTQGPRARARQVS. The residue at position 1263 (serine 1263) is a Phosphoserine. Residues 1282-1313 form a disordered region; sequence TISAQPSGPSHRHDRTQTQMDSEQRGQRSMSV. A compositionally biased stretch (polar residues) spans 1298-1313; that stretch reads QTQMDSEQRGQRSMSV.

It belongs to the PtdIns transfer protein family. PI transfer class IIA subfamily. As to quaternary structure, interacts with CPNE4 (via VWFA domain). Interacts with PTK2B via its C-terminus. Detected in retina and in the dentate gyrus of the cerebellum.

The protein localises to the endomembrane system. It localises to the cytoplasm. The protein resides in the cytoskeleton. Functionally, catalyzes the transfer of phosphatidylinositol and phosphatidylcholine between membranes (in vitro). Binds calcium ions. The sequence is that of Membrane-associated phosphatidylinositol transfer protein 2 (Pitpnm2) from Mus musculus (Mouse).